A 145-amino-acid chain; its full sequence is Cell division protein SepF (145 aa).

Belongs to the SepF family. As to quaternary structure, homodimer. Interacts with FtsZ.

Its subcellular location is the cytoplasm. Cell division protein that is part of the divisome complex and is recruited early to the Z-ring. Probably stimulates Z-ring formation, perhaps through the cross-linking of FtsZ protofilaments. Its function overlaps with FtsA. The sequence is that of Cell division protein SepF from Lactobacillus helveticus (strain DPC 4571).